We begin with the raw amino-acid sequence, 201 residues long: 3-isopropylmalate dehydratase small subunit (201 aa).

The protein belongs to the LeuD family. LeuD type 1 subfamily. As to quaternary structure, heterodimer of LeuC and LeuD.

The enzyme catalyses (2R,3S)-3-isopropylmalate = (2S)-2-isopropylmalate. It functions in the pathway amino-acid biosynthesis; L-leucine biosynthesis; L-leucine from 3-methyl-2-oxobutanoate: step 2/4. Catalyzes the isomerization between 2-isopropylmalate and 3-isopropylmalate, via the formation of 2-isopropylmaleate. The polypeptide is 3-isopropylmalate dehydratase small subunit (Escherichia coli O127:H6 (strain E2348/69 / EPEC)).